A 541-amino-acid polypeptide reads, in one-letter code: Glycogen synthase (541 aa).

Residue Lys-17 coordinates ADP-alpha-D-glucose. A disordered region spans residues 497-541 (LARPASPPDTAPVGKPARRRRTTALSTTARAHPVARAAGREKIRA).

Belongs to the glycosyltransferase 1 family. Bacterial/plant glycogen synthase subfamily.

The catalysed reaction is [(1-&gt;4)-alpha-D-glucosyl](n) + ADP-alpha-D-glucose = [(1-&gt;4)-alpha-D-glucosyl](n+1) + ADP + H(+). It functions in the pathway glycan biosynthesis; glycogen biosynthesis. Functionally, synthesizes alpha-1,4-glucan chains using ADP-glucose. This is Glycogen synthase from Ralstonia nicotianae (strain ATCC BAA-1114 / GMI1000) (Ralstonia solanacearum).